The sequence spans 201 residues: Ribosome maturation factor RimM (201 aa).

The PRC barrel domain occupies 94–168 (EDEYYHADLI…RLVADPPLGL (75 aa)). The segment at 164–201 (PPLGLLDDTRPPAGVEGEVEEDPGVGIDEDGDGKGGAS) is disordered. Residues 180–194 (GEVEEDPGVGIDEDG) are compositionally biased toward acidic residues.

This sequence belongs to the RimM family. In terms of assembly, binds ribosomal protein uS19.

The protein localises to the cytoplasm. Its function is as follows. An accessory protein needed during the final step in the assembly of 30S ribosomal subunit, possibly for assembly of the head region. Essential for efficient processing of 16S rRNA. May be needed both before and after RbfA during the maturation of 16S rRNA. It has affinity for free ribosomal 30S subunits but not for 70S ribosomes. This Rhodospirillum rubrum (strain ATCC 11170 / ATH 1.1.1 / DSM 467 / LMG 4362 / NCIMB 8255 / S1) protein is Ribosome maturation factor RimM.